The chain runs to 50 residues: Photosystem II reaction center protein M (50 aa).

A helical transmembrane segment spans residues 7 to 27 (GFIASLLFVGVPTIFLIGLFI).

This sequence belongs to the PsbM family. PSII is composed of 1 copy each of membrane proteins PsbA, PsbB, PsbC, PsbD, PsbE, PsbF, PsbH, PsbI, PsbJ, PsbK, PsbL, PsbM, PsbT, PsbX, PsbY, Psb30/Ycf12, peripheral proteins PsbO, CyanoQ (PsbQ), PsbU, PsbV and a large number of cofactors. It forms dimeric complexes.

Its subcellular location is the cellular thylakoid membrane. In terms of biological role, one of the components of the core complex of photosystem II (PSII). PSII is a light-driven water:plastoquinone oxidoreductase that uses light energy to abstract electrons from H(2)O, generating O(2) and a proton gradient subsequently used for ATP formation. It consists of a core antenna complex that captures photons, and an electron transfer chain that converts photonic excitation into a charge separation. This subunit is found at the monomer-monomer interface. The chain is Photosystem II reaction center protein M from Prochlorococcus marinus (strain MIT 9312).